Reading from the N-terminus, the 160-residue chain is Troponin C, skeletal muscle (160 aa).

Threonine 2 carries the N-acetylthreonine modification. EF-hand domains are found at residues glutamate 15–threonine 50, proline 51–glutamate 86, lysine 91–histidine 126, and valine 127–glutamine 160. Aspartate 28, aspartate 30, aspartate 34, glutamate 39, aspartate 64, aspartate 66, serine 68, threonine 70, glutamate 75, aspartate 104, asparagine 106, aspartate 108, tyrosine 110, glutamate 115, aspartate 140, asparagine 142, aspartate 144, arginine 146, and glutamate 151 together coordinate Ca(2+).

Belongs to the troponin C family. Fast skeletal muscle.

Functionally, troponin is the central regulatory protein of striated muscle contraction. Tn consists of three components: Tn-I which is the inhibitor of actomyosin ATPase, Tn-T which contains the binding site for tropomyosin and Tn-C. The binding of calcium to Tn-C abolishes the inhibitory action of Tn on actin filaments. In Mus musculus (Mouse), this protein is Troponin C, skeletal muscle (Tnnc2).